A 272-amino-acid polypeptide reads, in one-letter code: Shikimate dehydrogenase (NADP(+)) (272 aa).

Residues 14–16 (SKS) and Thr-61 contribute to the shikimate site. The Proton acceptor role is filled by Lys-65. Glu-77 lines the NADP(+) pocket. Shikimate-binding residues include Asn-86 and Asp-102. NADP(+) is bound by residues 126 to 130 (GAGGA), 149 to 154 (NRTVSR), and Met-213. A shikimate-binding site is contributed by Tyr-215. Gly-237 provides a ligand contact to NADP(+).

The protein belongs to the shikimate dehydrogenase family. As to quaternary structure, homodimer.

It catalyses the reaction shikimate + NADP(+) = 3-dehydroshikimate + NADPH + H(+). It participates in metabolic intermediate biosynthesis; chorismate biosynthesis; chorismate from D-erythrose 4-phosphate and phosphoenolpyruvate: step 4/7. Involved in the biosynthesis of the chorismate, which leads to the biosynthesis of aromatic amino acids. Catalyzes the reversible NADPH linked reduction of 3-dehydroshikimate (DHSA) to yield shikimate (SA). The polypeptide is Shikimate dehydrogenase (NADP(+)) (Escherichia coli (strain SMS-3-5 / SECEC)).